The chain runs to 305 residues: Acetyl-coenzyme A carboxylase carboxyl transferase subunit beta (305 aa).

Positions 25–294 (VWTKCDSCGQ…PGNDDVEIRS (270 aa)) constitute a CoA carboxyltransferase N-terminal domain. Residues cysteine 29, cysteine 32, cysteine 48, and cysteine 51 each contribute to the Zn(2+) site. The C4-type zinc-finger motif lies at 29-51 (CDSCGQVLYRAELERNLGVCPKC). The interval 281-305 (NHPEPGNDDVEIRSDAPSESSQDDA) is disordered.

It belongs to the AccD/PCCB family. Acetyl-CoA carboxylase is a heterohexamer composed of biotin carboxyl carrier protein (AccB), biotin carboxylase (AccC) and two subunits each of ACCase subunit alpha (AccA) and ACCase subunit beta (AccD). Requires Zn(2+) as cofactor.

Its subcellular location is the cytoplasm. It catalyses the reaction N(6)-carboxybiotinyl-L-lysyl-[protein] + acetyl-CoA = N(6)-biotinyl-L-lysyl-[protein] + malonyl-CoA. It participates in lipid metabolism; malonyl-CoA biosynthesis; malonyl-CoA from acetyl-CoA: step 1/1. Its function is as follows. Component of the acetyl coenzyme A carboxylase (ACC) complex. Biotin carboxylase (BC) catalyzes the carboxylation of biotin on its carrier protein (BCCP) and then the CO(2) group is transferred by the transcarboxylase to acetyl-CoA to form malonyl-CoA. The sequence is that of Acetyl-coenzyme A carboxylase carboxyl transferase subunit beta from Pectobacterium atrosepticum (strain SCRI 1043 / ATCC BAA-672) (Erwinia carotovora subsp. atroseptica).